Reading from the N-terminus, the 332-residue chain is D-xylose-binding periplasmic protein (332 aa).

The first 23 residues, 1 to 23, serve as a signal peptide directing secretion; sequence MKIKSALLTLVGALTVFSSSAHS.

This sequence belongs to the bacterial solute-binding protein 2 family.

It is found in the periplasm. In terms of biological role, involved in the high-affinity D-xylose membrane transport system. Binds with high affinity to xylose. In Haemophilus influenzae (strain ATCC 51907 / DSM 11121 / KW20 / Rd), this protein is D-xylose-binding periplasmic protein (xylF).